A 107-amino-acid polypeptide reads, in one-letter code: Theromyzin (107 aa).

The first 21 residues, 1–21 (MHAKIILALFLGMTAFLAVQA), serve as a signal peptide directing secretion.

As to expression, coelomic liquid (at protein level). Expressed in large fat cells in contact with coelomic cavities, in intestinal epithelia and at the epidermis level.

The protein resides in the secreted. Has bacteriostatic activity against M.luteus. No activity toward E.coli and F.oxysporum. This is Theromyzin from Theromyzon tessulatum (Duck leech).